Reading from the N-terminus, the 261-residue chain is Cytochrome c oxidase subunit 3 (261 aa).

The Mitochondrial matrix segment spans residues 1–15 (MTHQTHAYHMVNPSP). Residues 16 to 34 (WPLTGALSALLMTSGLIMW) traverse the membrane as a helical segment. At 35–40 (FHFNSM) the chain is on the mitochondrial intermembrane side. Residues 41-66 (YLLMLGLTTNTLTMYQWWRDIVREST) form a helical membrane-spanning segment. Residues 67–72 (FQGHHT) lie on the Mitochondrial matrix side of the membrane. The chain crosses the membrane as a helical span at residues 73–105 (PIVQKGLRYGMILFIVSEVFFFAGFFWAFYHSS). Residues 106 to 128 (LAPTPELGGCWPPTGITPLNPME) lie on the Mitochondrial intermembrane side of the membrane. The helical transmembrane segment at 129–152 (VPLLNTSVLLASGVSITWAHHSLM) threads the bilayer. Over 153–155 (EGN) the chain is Mitochondrial matrix. The chain crosses the membrane as a helical span at residues 156–183 (RKHMLQALFITISLGVYFTLLQASEYYE). The Mitochondrial intermembrane portion of the chain corresponds to 184-190 (TPFTISD). The chain crosses the membrane as a helical span at residues 191 to 223 (GIYGSTFFMATGFHGLHVIIGSTFLIVCFMRQL). The Mitochondrial matrix segment spans residues 224–232 (KFHFTSNHH). Residues 233–256 (FGFEAAAWYWHFVDVVWLFLYVSI) form a helical membrane-spanning segment. Residues 257 to 261 (YWWGS) are Mitochondrial intermembrane-facing.

It belongs to the cytochrome c oxidase subunit 3 family. As to quaternary structure, component of the cytochrome c oxidase (complex IV, CIV), a multisubunit enzyme composed of 14 subunits. The complex is composed of a catalytic core of 3 subunits MT-CO1, MT-CO2 and MT-CO3, encoded in the mitochondrial DNA, and 11 supernumerary subunits COX4I, COX5A, COX5B, COX6A, COX6B, COX6C, COX7A, COX7B, COX7C, COX8 and NDUFA4, which are encoded in the nuclear genome. The complex exists as a monomer or a dimer and forms supercomplexes (SCs) in the inner mitochondrial membrane with NADH-ubiquinone oxidoreductase (complex I, CI) and ubiquinol-cytochrome c oxidoreductase (cytochrome b-c1 complex, complex III, CIII), resulting in different assemblies (supercomplex SCI(1)III(2)IV(1) and megacomplex MCI(2)III(2)IV(2)).

The protein localises to the mitochondrion inner membrane. The catalysed reaction is 4 Fe(II)-[cytochrome c] + O2 + 8 H(+)(in) = 4 Fe(III)-[cytochrome c] + 2 H2O + 4 H(+)(out). In terms of biological role, component of the cytochrome c oxidase, the last enzyme in the mitochondrial electron transport chain which drives oxidative phosphorylation. The respiratory chain contains 3 multisubunit complexes succinate dehydrogenase (complex II, CII), ubiquinol-cytochrome c oxidoreductase (cytochrome b-c1 complex, complex III, CIII) and cytochrome c oxidase (complex IV, CIV), that cooperate to transfer electrons derived from NADH and succinate to molecular oxygen, creating an electrochemical gradient over the inner membrane that drives transmembrane transport and the ATP synthase. Cytochrome c oxidase is the component of the respiratory chain that catalyzes the reduction of oxygen to water. Electrons originating from reduced cytochrome c in the intermembrane space (IMS) are transferred via the dinuclear copper A center (CU(A)) of subunit 2 and heme A of subunit 1 to the active site in subunit 1, a binuclear center (BNC) formed by heme A3 and copper B (CU(B)). The BNC reduces molecular oxygen to 2 water molecules using 4 electrons from cytochrome c in the IMS and 4 protons from the mitochondrial matrix. The sequence is that of Cytochrome c oxidase subunit 3 (MT-CO3) from Halichoerus grypus (Gray seal).